The primary structure comprises 340 residues: Terpene synthase 29 (340 aa).

Positions 132, 197, 257, 261, and 265 each coordinate Mg(2+). Residues 132-138 carry the DDXXXXD motif motif; the sequence is DEPDILE. The NSE/DTE motif signature appears at 257–265; that stretch reads NDILSFYKE.

This sequence belongs to the trichodiene synthase family. Requires Mg(2+) as cofactor.

Terpene cyclase that catalyzes the cyclization of farnesyl diphosphate (FPP) to a single major terpene scaffold whose chemical structure is still unknown. In Postia placenta (strain ATCC 44394 / Madison 698-R) (Brown rot fungus), this protein is Terpene synthase 29.